The following is a 689-amino-acid chain: Putative pentatricopeptide repeat-containing protein At3g15130 (689 aa).

14 PPR repeats span residues 5–39, 40–70, 71–105, 106–140, 141–171, 172–206, 209–243, 246–276, 277–311, 312–342, 347–377, 378–412, 413–448, and 449–479; these read QRQN…GSGL, NLIT…MPER, NVVS…GIYP, NEFT…GFEM, MVEV…IVDR, SLIS…NIKE, DEFT…GFHC, SATI…IKEK, TMIS…NSQI, DSFA…AVKL, ETSV…MQLK, DVIS…NIEP, DEVC…GIKP, and RVEH…MPIK. The interval 484 to 559 is type E motif; sequence IWQTLLSLCR…EAGMSWVEIE (76 aa). A type E(+) motif region spans residues 560–590; the sequence is REVHFFRSGEDSHPLTPVIQETLKEAERRLR. A type DYW motif region spans residues 592–689; that stretch reads ELGYVYGLKH…DGCCSCGDYW (98 aa).

The protein belongs to the PPR family. PCMP-H subfamily.

This Arabidopsis thaliana (Mouse-ear cress) protein is Putative pentatricopeptide repeat-containing protein At3g15130 (PCMP-H86).